The primary structure comprises 2486 residues: Nonribosomal peptide synthetase nanA (2486 aa).

The interval 231-637 (FSARQPLSPA…GRRGTQVKLR (407 aa)) is adenylation 1. Residues 786–860 (TDIELKVHAL…DLARSAKETS (75 aa)) form the Carrier 1 domain. An O-(pantetheine 4'-phosphoryl)serine modification is found at Ser820. The condensation 1 stretch occupies residues 902–1314 (EDAYPCTPLQ…LKSVPRVSSQ (413 aa)). The interval 1339 to 1735 (RAQARKTPLA…GRIGDQMKIR (397 aa)) is adenylation 2. Carrier domains are found at residues 1872 to 1948 (PPST…SSAS) and 2404 to 2480 (SSSE…QTQA). Residues Ser1909 and Ser2441 each carry the O-(pantetheine 4'-phosphoryl)serine modification. Residues 2404 to 2480 (SSSETIVEPL…KLARLLQTQA (77 aa)) form a condensation 2 region.

The protein belongs to the NRP synthetase family.

It functions in the pathway secondary metabolite biosynthesis. In terms of biological role, nonribosomal peptide synthetase; part of the gene cluster that mediates the biosynthesis of the benzazepine alkaloid nanangelenin A which contains an unprecedented 3,4-dihydro-1-benzazepine-2,5-dione-N-prenyl-N-acetoxy-anthranilamide scaffold. The first step of nanangelenin biosynthesis is catalyzed by the indoleamine 2,3-dioxygenase nanC which produces N-formyl-kynurenine through the catabolism of tryptophan. The two-module NRPS nanA then utilizes anthranilate (Ant) and L-kynurenine (L-Kyn) to assemble the dipeptide product nanangelenin B. The first adenylation domain of nanA (A1) loads anthranilate onto the T1 domain, while A2 loads kynurenine, generated through spontaneous nonenzymatic deformylation of the nanC-supplied N-formyl-kynurenine. The peptide bond formation between the tethered amino acids is catalyzed by the first condensation domain (C1) between anthranilate's carbonyl carbon and kynurenine's aliphatic primary amine. The second C domain (C2) catalyzes the final cyclization event between the aromatic amine of kynurenine and the tethered carbonyl carbon, yielding nanangelenin B. The terminal T3 domain enhances the catalytic efficiency of C2, suggesting the T2-tethered Ant-L-Kyn is transferred to T3 prior to cyclization by C2. Once released from nanA, nanangelenin B is then prenylated by the prenyltransferase nanD to form nanangelenin C. Nanangelenin C is then N-hydroxylated by the FAD-dependent monooxygenase nanF and further acetylated by the acetyltransferase nanB to yield nanangelenin F. Finally, the N-methyltransferase nanE methylates the amide nitrogen of 1-benzazepine to convert nanangelenin F into nanangelenin A. NanE is also able to methylate most of the intermediates of the pathway such as nanangelenin B and nanangelenin C to produce nanangelenin D and nanangelenin E, respectively. The polypeptide is Nonribosomal peptide synthetase nanA (Aspergillus nanangensis).